A 91-amino-acid chain; its full sequence is Large ribosomal subunit protein uL23 (91 aa).

It belongs to the universal ribosomal protein uL23 family. In terms of assembly, part of the 50S ribosomal subunit. Contacts protein L29.

In terms of biological role, binds to 23S rRNA. One of the proteins that surrounds the polypeptide exit tunnel on the outside of the ribosome. This chain is Large ribosomal subunit protein uL23, found in Staphylothermus marinus (strain ATCC 43588 / DSM 3639 / JCM 9404 / F1).